We begin with the raw amino-acid sequence, 518 residues long: Protein PAC2 (518 aa).

Residues 23-67 enclose the CAP-Gly domain; sequence VIKPWPSVKAYGVEWDDHSRGKHSGTIDDIHYFDVQIPNSGSFLK. LRR repeat units follow at residues 153-174, 179-201, 204-227, 229-252, 255-276, 277-298, 299-319, and 324-345; these read NVKD…CEFI, NLES…KEYD, HIKT…LKSF, TLKM…ENEI, TLEE…PKNL, TLKG…AIYS, VESL…DDLN, and SLKN…INVE.

Its subcellular location is the cytoplasm. It is found in the cytoskeleton. Required for viability in the absence of the kinesin-related CIN8 mitotic motor. Seems to be involved in the assembly of alpha-tubulin. The sequence is that of Protein PAC2 (PAC2) from Saccharomyces cerevisiae (strain ATCC 204508 / S288c) (Baker's yeast).